Reading from the N-terminus, the 1000-residue chain is Ribosome assembly protein 1 (1000 aa).

Positions 17-246 (ENIRNFTLLA…YEKKLGLKQK (230 aa)) constitute a tr-type G domain. Residues 26–33 (AHVDHGKT), 100–104 (DSPGH), and 154–157 (NKMD) contribute to the GTP site.

It belongs to the TRAFAC class translation factor GTPase superfamily. Classic translation factor GTPase family.

The protein resides in the cytoplasm. It carries out the reaction GTP + H2O = GDP + phosphate + H(+). GTPase activity is stimulated in the presence of 60S subunits. Functionally, GTPase involved in the biogenesis of the 60S ribosomal subunit and translational activation of ribosomes. Together with sdo1, may trigger the GTP-dependent release of tif6 from 60S pre-ribosomes in the cytoplasm, thereby activating ribosomes for translation competence by allowing 80S ribosome assembly and facilitating tif6 recycling to the nucleus, where it is required for 60S rRNA processing and nuclear export. Inhibits GTPase activity of ribosome-bound EF-2. In Schizosaccharomyces pombe (strain 972 / ATCC 24843) (Fission yeast), this protein is Ribosome assembly protein 1 (ria1).